Consider the following 374-residue polypeptide: Aclacinomycin 10-hydroxylase RdmB (374 aa).

S-adenosyl-L-methionine contacts are provided by Y171, G190, E213, D240, F241, and S255.

It belongs to the class I-like SAM-binding methyltransferase superfamily. Cation-independent O-methyltransferase family. As to quaternary structure, homodimer. Homotetramer in solution. Tetramers might not be very stable in solution.

It catalyses the reaction 15-demethylaclacinomycin T + AH2 + O2 = 10-decarboxymethylaclacinomycin T + A + CO2 + H2O. The enzyme catalyses 10-carboxy-13-deoxycarminomycin + AH2 + O2 + H(+) = 10-hydroxy-13-deoxycarminomycin + A + CO2 + H2O. It carries out the reaction 10-hydroxy-13-deoxycarminomycin + S-adenosyl-L-methionine = 10-hydroxy-13-deoxydaunorubicin + S-adenosyl-L-homocysteine + H(+). It participates in antibiotic biosynthesis; rhodomycin biosynthesis. The protein operates within antibiotic biosynthesis; aclacinomycin biosynthesis. The hydroxylation reaction requires S-adenosyl-L-methionine (SAM) as a cofactor. S-adenosine-L-homocysteine and sinefungin (a SAM analog) can also support the decarboxylative hydroxylation activity with 10-carboxy-13-deoxycarminomycin as substrate. SAM and its analogs are considered an essential structural ligand to maintain ternary structural integrity and the proper binding mode and orientation of electron-rich substrates during decarboxylative hydroxylation of C-10 by RdmB. Involved in the biosynthesis of anthracyclines, an important group of aromatic polyketide antibiotics used in cancer chemotherapy. Acts as a 10-hydroxylase to catalyze a decarboxylative hydroxylation reaction on anthracyclines. During biosynthesis of rhodomycin, it catalyzes the removal of the carboxylic group at the C-10 position of 15-demethoxy-epsilon-rhodomycin coupled to hydroxylation at the same C-10 position to yield beta-rhodomycin. In vitro, can also catalyze the removal of the carboxylic group at the C-10 position of 15-demethoxyaclacinomycin T coupled to hydroxylation at the same C-10 position to yield 10-decarboxymethylaclacinomycin T. It can also use 10-carboxy-13-deoxycarminomycin, an analog of 15-demethoxy-epsilon-rhodomycin, to yield 10-hydroxy-13-deoxycarminomycin. Functionally, in addition to its hydroxylation activity, it can act in vitro as a S-adenosyl-L-methionine-dependent O-methyltransferase and catalyze the 4-O-methylation of 10-hydroxy-13-deoxycarminomycin to 10-hydroxy-13-deoxydaunorubicin. The triglycosyl group of anthracyclines prevents the methylation reaction. This Streptomyces purpurascens protein is Aclacinomycin 10-hydroxylase RdmB.